Reading from the N-terminus, the 153-residue chain is Lipoprotein signal peptidase (153 aa).

Transmembrane regions (helical) follow at residues 6–26 (IVAVIVLLLIGLDQLVKSYIV), 60–80 (QQLLFAVITLVVVIGAIWYLH), and 85–105 (DSFWMVLGLTLIIAGGLGNFI). Catalysis depends on residues aspartate 115 and aspartate 131. Residues 124–144 (FAIFNVADSYLTVGVIILLIA) form a helical membrane-spanning segment.

It belongs to the peptidase A8 family.

The protein localises to the cell membrane. It carries out the reaction Release of signal peptides from bacterial membrane prolipoproteins. Hydrolyzes -Xaa-Yaa-Zaa-|-(S,diacylglyceryl)Cys-, in which Xaa is hydrophobic (preferably Leu), and Yaa (Ala or Ser) and Zaa (Gly or Ala) have small, neutral side chains.. It participates in protein modification; lipoprotein biosynthesis (signal peptide cleavage). Functionally, this protein specifically catalyzes the removal of signal peptides from prolipoproteins. The protein is Lipoprotein signal peptidase of Streptococcus pneumoniae (strain ATCC BAA-255 / R6).